Here is a 405-residue protein sequence, read N- to C-terminus: Glucose-1-phosphate adenylyltransferase (405 aa).

Alpha-D-glucose 1-phosphate is bound by residues Tyr96, Gly161, 176–177 (EK), and Ser194.

The protein belongs to the bacterial/plant glucose-1-phosphate adenylyltransferase family. As to quaternary structure, homotetramer.

It catalyses the reaction alpha-D-glucose 1-phosphate + ATP + H(+) = ADP-alpha-D-glucose + diphosphate. The protein operates within glycan biosynthesis; glycogen biosynthesis. Its function is as follows. Involved in the biosynthesis of ADP-glucose, a building block required for the elongation reactions to produce glycogen. Catalyzes the reaction between ATP and alpha-D-glucose 1-phosphate (G1P) to produce pyrophosphate and ADP-Glc. The chain is Glucose-1-phosphate adenylyltransferase from Aliivibrio fischeri (strain MJ11) (Vibrio fischeri).